The primary structure comprises 251 residues: Meso-2,3-butanediol dehydrogenase (251 aa).

NAD(+) is bound by residues Asn-15, Met-17, Asp-36, Asp-60, Val-61, and Asn-87. Positions 138, 140, and 151 each coordinate (R)-acetoin. A (S)-acetoin-binding site is contributed by Ser-138. NAD(+) is bound by residues Tyr-151, Lys-155, Val-184, and Thr-186. Tyr-151 contributes to the (S)-acetoin binding site. Tyr-151 functions as the Proton acceptor in the catalytic mechanism.

Belongs to the short-chain dehydrogenases/reductases (SDR) family. As to quaternary structure, homotetramer; dimer of dimers.

The catalysed reaction is (R,S)-butane-2,3-diol + NAD(+) = (R)-acetoin + NADH + H(+). The enzyme catalyses (S,S)-butane-2,3-diol + NAD(+) = (S)-acetoin + NADH + H(+). It catalyses the reaction (S)-acetoin + NAD(+) = diacetyl + NADH + H(+). Its activity is regulated as follows. Oxidation of meso-2,3-butanediol is enhanced in the presence of Fe(2+). Reduction of diacetyl and (3S/3R)-acetoin is slightly enhanced in the presence of Mg(2+) and Mn(2+). Activity is inhibited by several metal ions, particularly Fe(3+) for reduction of diacetyl and acetoin. Catalyzes the NAD-dependent oxidation of meso-2,3-butanediol to (3R)-acetoin, and of (2S,3S)-2,3-butanediol to (3S)-acetoin, with much lower efficiency. Can also oxidize several primary alcohols such as glycerol, 1-2-pentanediol and 1,2-propanediol, with lower activity. Cannot use (2R,3R)-2,3-butanediol. In the presence of NADH, catalyzes the reduction of (3R)-acetoin to meso-2,3-butanediol, of (3S)-acetoin to (2S,3S)-2,3-butanediol and of diacetyl to (3S)-acetoin. No activity is detected with NADPH/NADP(+). This chain is Meso-2,3-butanediol dehydrogenase, found in Serratia marcescens.